Here is a 416-residue protein sequence, read N- to C-terminus: Gamma-glutamyl phosphate reductase (416 aa).

This sequence belongs to the gamma-glutamyl phosphate reductase family.

The protein localises to the cytoplasm. The enzyme catalyses L-glutamate 5-semialdehyde + phosphate + NADP(+) = L-glutamyl 5-phosphate + NADPH + H(+). It functions in the pathway amino-acid biosynthesis; L-proline biosynthesis; L-glutamate 5-semialdehyde from L-glutamate: step 2/2. In terms of biological role, catalyzes the NADPH-dependent reduction of L-glutamate 5-phosphate into L-glutamate 5-semialdehyde and phosphate. The product spontaneously undergoes cyclization to form 1-pyrroline-5-carboxylate. This chain is Gamma-glutamyl phosphate reductase, found in Halalkalibacterium halodurans (strain ATCC BAA-125 / DSM 18197 / FERM 7344 / JCM 9153 / C-125) (Bacillus halodurans).